Here is a 664-residue protein sequence, read N- to C-terminus: Sulfoquinovosidase (664 aa).

Residues E135, E270, R283, L284, and W286 each contribute to the 3-(6-sulfo-alpha-D-quinovosyl)glycerol site. D388 acts as the Nucleophile in catalysis. Residue E391 is part of the active site. R438 contacts 3-(6-sulfo-alpha-D-quinovosyl)glycerol. D455 functions as the Proton donor in the catalytic mechanism. H520 serves as a coordination point for 3-(6-sulfo-alpha-D-quinovosyl)glycerol.

This sequence belongs to the glycosyl hydrolase 31 family.

It carries out the reaction 3-(6-sulfo-alpha-D-quinovosyl)glycerol + H2O = 6-sulfo-alpha-D-quinovose + glycerol. In terms of biological role, part of the sulfoquinovose monooxygenase (sulfo-SMO) pathway, a D-sulfoquinovose degradation pathway that enables the complete utilization of all carbons within sulfoquinovose (SQ) with concomitant production of inorganic sulfite. Catalyzes the first step of the pathway, the hydrolysis of sulfoquinovosyl glycerol (SQGro) to release sulfoquinovose (SQ). Hydrolyzes both epimers of SQGro, with a preference for the natural 2'R isomer. In vitro, can use the substrate analog para-nitrophenyl alpha-sulfoquinovoside (PNPSQ), but shows no detectable activity toward 4-nitrophenyl alpha-D-glucopyranoside (PNPGlc). The chain is Sulfoquinovosidase from Agrobacterium fabrum (strain C58 / ATCC 33970) (Agrobacterium tumefaciens (strain C58)).